The following is a 379-amino-acid chain: AT-rich binding protein (379 aa).

The C2H2-type 1 zinc finger occupies 29 to 52 (IVCHTCQEELQTQDQFWKHIQDEH). Basic and acidic residues predominate over residues 114-124 (EQREVELHEAH). Disordered regions lie at residues 114–148 (EQRE…DAAK) and 221–267 (PTAS…STTL). 3 stretches are compositionally biased toward low complexity: residues 125 to 143 (QQQQ…QQQQ), 223 to 242 (ASFV…TTPP), and 249 to 262 (QQQQ…QQQQ). 2 C2H2-type zinc fingers span residues 312–336 (YICD…RVVH) and 342–365 (FNCD…KKKH).

It localises to the nucleus. Its function is as follows. May be a transcription factor for genes having (A+T) stretches in their promoter and/or enhancer regions. Binds to AT rich DNA. The protein is AT-rich binding protein of Drosophila willistoni (Fruit fly).